We begin with the raw amino-acid sequence, 715 residues long: Gelsolin, cytoplasmic (715 aa).

The tract at residues 1–124 is actin-severing; the sequence is MTTELEIQKA…YLIGGVASGF (124 aa). A Gelsolin-like 1 repeat occupies 24 to 75; that stretch reads FELVPVPKTNHGKFYTGDSYIILKTTALESGRGFEWNLHYWQGKESSQDERG. The actin-actin interfilament contact point stretch occupies residues 72-75; the sequence is DERG. 136 to 145 is a binding site for a 1,2-diacyl-sn-glycero-3-phospho-(1D-myo-inositol-4,5-bisphosphate); sequence KVLTRVKGKR. Gelsolin-like repeat units lie at residues 147-187, 260-306, and 405-451; these read VRAT…FEKN, LKIT…TERA, and LRKE…NERT. Positions 384–715 are actin-binding, Ca-sensitive; that stretch reads AAESKMIDDG…FLGWDKTLWD (332 aa). 9 residues coordinate Ca(2+): Gly421, Asp422, Glu449, Thr499, Asn539, Asp540, Glu562, Asp642, and Glu665. Gelsolin-like repeat units follow at residues 524-564 and 625-667; these read CRAV…SEIQ and FIAE…EEKM.

This sequence belongs to the villin/gelsolin family. In terms of tissue distribution, predominantly in the body wall muscle, but expression is not restricted to muscle cells.

The protein resides in the cytoplasm. The protein localises to the cytoskeleton. Functionally, calcium-regulated, actin-modulating protein that binds to the plus (or barbed) ends of actin monomers or filaments, preventing monomer exchange (end-blocking or capping). It can promote the assembly of monomers into filaments (nucleation) as well as sever filaments already formed. This chain is Gelsolin, cytoplasmic, found in Halocynthia roretzi (Sea squirt).